We begin with the raw amino-acid sequence, 138 residues long: Basic phospholipase A2 Sct-N6 (138 aa).

The N-terminal stretch at 1–16 is a signal peptide; sequence MRTFWIVAVLLVGVEG. 7 disulfide bridges follow: Cys42–Cys131, Cys44–Cys60, Cys59–Cys111, Cys65–Cys138, Cys66–Cys104, Cys73–Cys97, and Cys91–Cys102. 3 residues coordinate Ca(2+): Tyr43, Gly45, and Gly47. His63 is an active-site residue. Asp64 lines the Ca(2+) pocket. Residue Asp105 is part of the active site.

The protein belongs to the phospholipase A2 family. Group II subfamily. D49 sub-subfamily. Requires Ca(2+) as cofactor. Expressed by the venom gland.

The protein resides in the secreted. It carries out the reaction a 1,2-diacyl-sn-glycero-3-phosphocholine + H2O = a 1-acyl-sn-glycero-3-phosphocholine + a fatty acid + H(+). Snake venom phospholipase A2 (PLA2) that displays edema-inducing activities, as well as presynaptic neurotoxicity and low myotoxicity. PLA2 catalyzes the calcium-dependent hydrolysis of the 2-acyl groups in 3-sn-phosphoglycerides. The sequence is that of Basic phospholipase A2 Sct-N6 from Sistrurus tergeminus (Western massasauga).